The following is a 404-amino-acid chain: Zinc finger TRAF-type-containing protein 1 (404 aa).

The span at 1-13 (MSGAEEAGGGGPA) shows a compositional bias: gly residues. Residues 1–22 (MSGAEEAGGGGPAAGPAGSVPA) form a disordered region. The segment at 111 to 156 (CTVCLDLPKASVYQCTNGHLMCAGCFIHLLADARLKEEQATCPNCR) adopts an RING-type; degenerate zinc-finger fold. The TRAF-type zinc-finger motif lies at 152 to 225 (CPNCRCEISK…PWHGPFHELT (74 aa)).

Belongs to the ZFTRAF1 family. Interacts with LGALS3.

The protein localises to the cytoplasm. Its subcellular location is the perinuclear region. This is Zinc finger TRAF-type-containing protein 1 from Homo sapiens (Human).